The following is a 72-amino-acid chain: Translation initiation factor IF-1 (72 aa).

The S1-like domain maps to 2–72 (AKDDVIEVEG…TRGRITYRYK (71 aa)). Tyr60 bears the Phosphotyrosine mark.

It belongs to the IF-1 family. Component of the 30S ribosomal translation pre-initiation complex which assembles on the 30S ribosome in the order IF-2 and IF-3, IF-1 and N-formylmethionyl-tRNA(fMet); mRNA recruitment can occur at any time during PIC assembly.

The protein localises to the cytoplasm. One of the essential components for the initiation of protein synthesis. Stabilizes the binding of IF-2 and IF-3 on the 30S subunit to which N-formylmethionyl-tRNA(fMet) subsequently binds. Helps modulate mRNA selection, yielding the 30S pre-initiation complex (PIC). Upon addition of the 50S ribosomal subunit IF-1, IF-2 and IF-3 are released leaving the mature 70S translation initiation complex. This is Translation initiation factor IF-1 from Bacillus subtilis (strain 168).